Consider the following 42-residue polypeptide: Small protein MntS (42 aa).

The protein resides in the cytoplasm. Its function is as follows. Required for repression of mntH by MntR. May function as a chaperone that makes manganese more available by delivering it to the necessary cellular locations when manganese is limiting. This chain is Small protein MntS (mntS), found in Escherichia coli (strain K12).